We begin with the raw amino-acid sequence, 291 residues long: Proteasome subunit beta (291 aa).

A propeptide spans 1–57 (MTWPLPDRLSINSLSGTPAVDLSSFTDFLRRQAPELLPASISGGAPLAGGDAQLPHG) (removed in mature form; by autocatalysis). T58 serves as the catalytic Nucleophile.

The protein belongs to the peptidase T1B family. The 20S proteasome core is composed of 14 alpha and 14 beta subunits that assemble into four stacked heptameric rings, resulting in a barrel-shaped structure. The two inner rings, each composed of seven catalytic beta subunits, are sandwiched by two outer rings, each composed of seven alpha subunits. The catalytic chamber with the active sites is on the inside of the barrel. Has a gated structure, the ends of the cylinder being occluded by the N-termini of the alpha-subunits. Is capped by the proteasome-associated ATPase, ARC.

The protein localises to the cytoplasm. It carries out the reaction Cleavage of peptide bonds with very broad specificity.. It functions in the pathway protein degradation; proteasomal Pup-dependent pathway. The formation of the proteasomal ATPase ARC-20S proteasome complex, likely via the docking of the C-termini of ARC into the intersubunit pockets in the alpha-rings, may trigger opening of the gate for substrate entry. Interconversion between the open-gate and close-gate conformations leads to a dynamic regulation of the 20S proteasome proteolysis activity. In terms of biological role, component of the proteasome core, a large protease complex with broad specificity involved in protein degradation. The protein is Proteasome subunit beta of Mycobacterium tuberculosis (strain ATCC 25177 / H37Ra).